The chain runs to 238 residues: Protein lifeguard 4 (238 aa).

At 1-38 the chain is on the cytoplasmic side; it reads MADTDPGYPRSSIEDDFNYGSCVASASVHIRMAFLRKV. The helical transmembrane segment at 39 to 59 threads the bilayer; that stretch reads YSILSLQVLLTTVTSALFLYF. Residues 60–68 are Lumenal-facing; that stretch reads QALRTFVHE. Residues 69 to 89 traverse the membrane as a helical segment; it reads SPALIVVFALGSLGLIFALTL. Residues 90-97 are Cytoplasmic-facing; the sequence is HRHTHPLN. A helical transmembrane segment spans residues 98 to 118; that stretch reads LYLLFAFTLSESLAVAAVVTF. Residues 119–120 lie on the Lumenal side of the membrane; the sequence is YD. The helical transmembrane segment at 121–141 threads the bilayer; it reads VYLVLQAFIMTTAVFLGLTAY. The Cytoplasmic portion of the chain corresponds to 142 to 151; that stretch reads TLQSKRDFTK. The chain crosses the membrane as a helical span at residues 152 to 172; it reads FGAGLFAGLWILCLAGFLKLF. Over 173–175 the chain is Lumenal; sequence FYS. A helical transmembrane segment spans residues 176-196; that stretch reads ETMELVLASLGALLFCGFIIY. Residues 197-208 lie on the Cytoplasmic side of the membrane; sequence DTHSLMHRLSPE. The segment at residues 209 to 229 is an intramembrane region (helical); that stretch reads EYVIAAISLYMDIINLFLHLL. At 230 to 238 the chain is on the cytoplasmic side; it reads KFLEAVNKK.

The protein belongs to the BI1 family. LFG subfamily. Interacts with ITPR3.

It localises to the golgi apparatus membrane. Functionally, anti-apoptotic protein which can inhibit apoptosis induced by intrinsic and extrinsic apoptotic stimuli. Can modulate both capacitative Ca2+ entry and inositol 1,4,5-trisphosphate (IP3)-mediated Ca2+ release. This Mus musculus (Mouse) protein is Protein lifeguard 4 (Tmbim4).